A 527-amino-acid polypeptide reads, in one-letter code: Cytochrome P450 monooygenase 3 (527 aa).

Residues Ile-21–Ile-41 form a helical membrane-spanning segment. Cys-473 lines the heme pocket.

The protein belongs to the cytochrome P450 family. It depends on heme as a cofactor.

Its subcellular location is the membrane. Its pathway is plant hormone biosynthesis; gibberellin biosynthesis. Gibberellin 13-hydroxylase; part of the gene cluster that mediates the biosynthesis of gibberellins (GAs), diterpenoids that may provide a selective advantage during infection of the preferred host plant, rice. Gibberellins (GAs) are diterpenoids and are synthesized via the mevalonate pathway. Biosynthesis of the major metabolite GA3 (gibberellic acid) from geranylgeranyl diphosphate (GGPP) requires 13 steps. The GGPP produced by the geranylgeranyl diphosphate synthase GGS2 is converted to ent-kaurene via ent-copalyldiphosphate in a two-step cyclization reaction performed by the bifunctional ent-copalyl diphosphate synthase/ent-kaurene synthase enzyme (CPS/KS). Ent-Kaurene is metabolized to GAs by a series of oxidation reactions catalyzed by cytochrome P450 monooxygenases. Cytochrome P450 monooxygenase P450-4 is an ent-kaurene oxidase that catalyzes the three oxidation steps between ent-kaurene and ent-kaurenoic acid. The highly multifunctional cytochrome P450 monooxygenase P450-1 then catalyzes four steps involving oxidation at two carbon atoms, in the main pathway from ent-kaurenoic acid to GA14 via GA12-aldehyde as well as producing kaurenolides and fujenoic acids as by-products. The cytochrome P450 monooxygenase P450-2 then converts GA14 to GA4 by removal of C-20. GA4 is further converted to GA7 by the GA4 desaturase DES via 1,2-desaturation before cytochrome P450 monooxygenase P450-3, a 13-hydroxylase, hydroxylates GA7 to GA3, the final product of the GA-biosynthetic pathway. This Gibberella fujikuroi (strain CBS 195.34 / IMI 58289 / NRRL A-6831) (Bakanae and foot rot disease fungus) protein is Cytochrome P450 monooygenase 3.